The chain runs to 338 residues: DNA-directed RNA polymerase subunit alpha (338 aa).

The tract at residues 1–230 (MRKITTSAYM…QQMSVFKGIL (230 aa)) is alpha N-terminal domain (alpha-NTD). The segment at 247 to 338 (FSKLLSSVED…ELKSQMSAKE (92 aa)) is alpha C-terminal domain (alpha-CTD).

It belongs to the RNA polymerase alpha chain family. In terms of assembly, homodimer. The RNAP catalytic core consists of 2 alpha, 1 beta, 1 beta' and 1 omega subunit. When a sigma factor is associated with the core the holoenzyme is formed, which can initiate transcription.

The catalysed reaction is RNA(n) + a ribonucleoside 5'-triphosphate = RNA(n+1) + diphosphate. In terms of biological role, DNA-dependent RNA polymerase catalyzes the transcription of DNA into RNA using the four ribonucleoside triphosphates as substrates. The sequence is that of DNA-directed RNA polymerase subunit alpha from Campylobacter concisus (strain 13826).